We begin with the raw amino-acid sequence, 349 residues long: DNA fragmentation factor subunit beta (349 aa).

In terms of domain architecture, CIDE-N spans 7 to 83; it reads QPKCVKLRAL…LLTAGETWHG (77 aa). The disordered stretch occupies residues 319–349; it reads RSRIYRPQTGSRRKQPPRKQPPRKRPPRKRQ. Positions 329-349 are enriched in basic residues; the sequence is SRRKQPPRKQPPRKRPPRKRQ.

Heterodimer of DFFA and DFFB. Interacts with H1-1.

It localises to the cytoplasm. The protein localises to the nucleus. With respect to regulation, inhibited by DFFA (DFF45). In terms of biological role, nuclease that induces DNA fragmentation and chromatin condensation during apoptosis. Degrades naked DNA and induces apoptotic morphology. In Rattus norvegicus (Rat), this protein is DNA fragmentation factor subunit beta (Dffb).